The chain runs to 131 residues: D-ribose pyranase (131 aa).

H20 serves as the catalytic Proton donor. Residues D28, H98, and 120–122 contribute to the substrate site; that span reads YAN.

The protein belongs to the RbsD / FucU family. RbsD subfamily. As to quaternary structure, homodecamer.

Its subcellular location is the cytoplasm. The enzyme catalyses beta-D-ribopyranose = beta-D-ribofuranose. It participates in carbohydrate metabolism; D-ribose degradation; D-ribose 5-phosphate from beta-D-ribopyranose: step 1/2. Its function is as follows. Catalyzes the interconversion of beta-pyran and beta-furan forms of D-ribose. The sequence is that of D-ribose pyranase from Chloroflexus aggregans (strain MD-66 / DSM 9485).